Reading from the N-terminus, the 386-residue chain is Chorismate synthase (386 aa).

Residues 32-60 form a disordered region; sequence LPLSEDDVQRELDRRRPGQSGVSTPRSER. The segment covering 38-47 has biased composition (basic and acidic residues); that stretch reads DVQRELDRRR. Arginine 46 is a binding site for NADP(+). Residues 123 to 125, glycine 290, 305 to 309, and arginine 332 each bind FMN; these read RAS and KPTPS.

The protein belongs to the chorismate synthase family. Requires FMNH2 as cofactor.

It catalyses the reaction 5-O-(1-carboxyvinyl)-3-phosphoshikimate = chorismate + phosphate. The protein operates within metabolic intermediate biosynthesis; chorismate biosynthesis; chorismate from D-erythrose 4-phosphate and phosphoenolpyruvate: step 7/7. Functionally, catalyzes the anti-1,4-elimination of the C-3 phosphate and the C-6 proR hydrogen from 5-enolpyruvylshikimate-3-phosphate (EPSP) to yield chorismate, which is the branch point compound that serves as the starting substrate for the three terminal pathways of aromatic amino acid biosynthesis. This reaction introduces a second double bond into the aromatic ring system. The sequence is that of Chorismate synthase from Methanopyrus kandleri (strain AV19 / DSM 6324 / JCM 9639 / NBRC 100938).